A 342-amino-acid chain; its full sequence is Farnesyl pyrophosphate synthase 1 (342 aa).

K48, R51, and Q86 together coordinate isopentenyl diphosphate. Mg(2+)-binding residues include D93 and D97. Residue R102 participates in dimethylallyl diphosphate binding. Isopentenyl diphosphate is bound at residue R103. Residues K190, T191, Q229, K246, and K255 each coordinate dimethylallyl diphosphate.

Belongs to the FPP/GGPP synthase family. Mg(2+) is required as a cofactor.

It is found in the cytoplasm. The catalysed reaction is isopentenyl diphosphate + dimethylallyl diphosphate = (2E)-geranyl diphosphate + diphosphate. It carries out the reaction isopentenyl diphosphate + (2E)-geranyl diphosphate = (2E,6E)-farnesyl diphosphate + diphosphate. It participates in isoprenoid biosynthesis; farnesyl diphosphate biosynthesis; farnesyl diphosphate from geranyl diphosphate and isopentenyl diphosphate: step 1/1. It functions in the pathway isoprenoid biosynthesis; geranyl diphosphate biosynthesis; geranyl diphosphate from dimethylallyl diphosphate and isopentenyl diphosphate: step 1/1. In terms of biological role, catalyzes the sequential condensation of isopentenyl pyrophosphate with the allylic pyrophosphates, dimethylallyl pyrophosphate, and then with the resultant geranylpyrophosphate to the ultimate product farnesyl pyrophosphate. In Parthenium argentatum (Guayule rubber plant), this protein is Farnesyl pyrophosphate synthase 1 (FPS1).